A 279-amino-acid chain; its full sequence is Inorganic pyrophosphatase 2 (279 aa).

Aspartate 12 functions as the Nucleophile in the catalytic mechanism. Residues aspartate 12 and aspartate 14 each coordinate Mg(2+). The active-site Proton donor is aspartate 14. Residues aspartate 23 and aspartate 98 each contribute to the substrate site. Aspartate 182 is a binding site for Mg(2+).

This sequence belongs to the HAD-like hydrolase superfamily. Tetramer. It depends on Mg(2+) as a cofactor.

The enzyme catalyses diphosphate + H2O = 2 phosphate + H(+). Functionally, catalyzes the specific cleavage of pyrophosphate. The sequence is that of Inorganic pyrophosphatase 2 from Arabidopsis thaliana (Mouse-ear cress).